A 551-amino-acid chain; its full sequence is Prunin 1 Pru du 6 (551 aa).

The signal sequence occupies residues 1–20 (MAKAFVFSLCLLLVFNGCLA). 2 disulfide bridges follow: Cys32–Cys65 and Cys108–Cys374. The Cupin type-1 1 domain occupies 37 to 312 (LQAREPDNRI…ALNVNEETAR (276 aa)). 3 disordered regions span residues 111-194 (TFEE…QKTR), 238-293 (NPRK…NVFS), and 329-360 (GNLD…RQQQ). Composition is skewed to low complexity over residues 114 to 124 (ESQQSSQQGRQ), 132 to 148 (QQQQ…QQEQ), and 168 to 185 (QEQQ…QQFR). Ca(2+) is bound at residue Arg194. Over residues 254–275 (QQGQSQPRQQGEQGRPGQHQQP) the composition is skewed to low complexity. The span at 282–293 (QEQQGNGNNVFS) shows a compositional bias: polar residues. Residues 339–350 (GRQEREHEERQQ) show a composition bias toward basic and acidic residues. Residues 351–360 (EQLQQERQQQ) show a composition bias toward low complexity. Positions 367–372 (NGLEET) match the NGXEET; peptidase recognition motif motif. Residues 380-529 (ENIGNPERAD…AYQISREQAR (150 aa)) enclose the Cupin type-1 2 domain.

Belongs to the 11S seed storage protein (globulins) family. As to quaternary structure, hexamer of two trimers; each subunit is composed of an acidic and a basic chain derived from a single precursor and linked by a disulfide bond. Proteolytically processed from a single precursor to produce an acidic and a basic chain that are linked by a disulfide bond. Expressed in seed (at protein level). Expressed in seed.

In terms of biological role, seed storage protein. This is Prunin 1 Pru du 6 from Prunus dulcis (Almond).